A 436-amino-acid chain; its full sequence is GTPase Der (436 aa).

EngA-type G domains are found at residues 4–167 (PIVA…DEET) and 176–351 (IRLS…ENHK). GTP is bound by residues 10-17 (GRPNVGKS), 57-61 (DTGGI), 119-122 (NKVD), 182-189 (GRPNVGKS), 229-233 (DTAGM), and 294-297 (NKWD). Residues 352 to 436 (KRVQSSTLNE…PIHIIPRRRN (85 aa)) form the KH-like domain.

It belongs to the TRAFAC class TrmE-Era-EngA-EngB-Septin-like GTPase superfamily. EngA (Der) GTPase family. Associates with the 50S ribosomal subunit.

Functionally, GTPase that plays an essential role in the late steps of ribosome biogenesis. In Staphylococcus haemolyticus (strain JCSC1435), this protein is GTPase Der.